A 1107-amino-acid polypeptide reads, in one-letter code: DNA polymerase delta catalytic subunit (1107 aa).

Residues 1–34 (MDGKRRPGPGPGVPPKRARGGLWDDDDAPRPSQF) form a disordered region. Positions 4–19 (KRRPGPGPGVPPKRAR) match the Nuclear localization signal motif. At arginine 19 the chain carries Omega-N-methylarginine. Lysine 574 participates in a covalent cross-link: Glycyl lysine isopeptide (Lys-Gly) (interchain with G-Cter in SUMO2). Residues cysteine 1012, cysteine 1015, cysteine 1026, and cysteine 1029 each coordinate Zn(2+). The CysA-type zinc finger occupies 1012 to 1029 (CIGCRTVLSHQGAVCEFC). Cysteine 1058, cysteine 1061, cysteine 1071, and cysteine 1076 together coordinate [4Fe-4S] cluster. Residues 1058–1076 (CQRCQGSLHEDVICTSRDC) carry the CysB motif motif.

This sequence belongs to the DNA polymerase type-B family. Component of the tetrameric DNA polymerase delta complex (Pol-delta4), which consists of POLD1/p125, POLD2/p50, POLD3/p66/p68 and POLD4/p12, with POLD1 bearing both DNA polymerase and 3' to 5' proofreading exonuclease activities. Within Pol-delta4, directly interacts with POLD2 and POLD4. Following genotoxic stress by DNA-damaging agents, such as ultraviolet light and methyl methanesulfonate, or by replication stress induced by treatment with hydroxyurea or aphidicolin, Pol-delta4 is converted into a trimeric form of the complex (Pol-delta3) by POLD4 degradation. Pol-delta3 is the major form at S phase replication sites and DNA damage sites. POLD1 displays different catalytic properties depending upon the complex it is found in. It exhibits higher proofreading activity and fidelity than Pol-delta4, making it particularly well suited to respond to DNA damage. Directly interacts with PCNA, as do POLD3 and POLD4; this interaction stimulates Pol-delta4 polymerase activity. As POLD2 and POLD4, directly interacts with WRNIP1; this interaction stimulates DNA polymerase delta-mediated DNA synthesis, independently of the presence of PCNA. This stimulation may be due predominantly to an increase of initiation frequency and also to increased processivity. Also observed as a dimeric complex with POLD2 (Pol-delta2 complex). Pol-delta2 is relatively insensitive to the PCNA stimulation (2-5-fold) compared to Pol-delta4 that is stimulated by over 50-fold. The DNA polymerase delta complex interacts with POLDIP2; this interaction is probably mediated through direct binding to POLD2. Interacts with CIAO1. Interacts with POLDIP2. Interacts with RFC1. Requires [4Fe-4S] cluster as cofactor. As to expression, widely expressed, with high levels of expression in heart and lung.

The protein localises to the nucleus. The enzyme catalyses DNA(n) + a 2'-deoxyribonucleoside 5'-triphosphate = DNA(n+1) + diphosphate. Its activity is regulated as follows. Regulated by alteration of quaternary structure. Exhibits burst rates of DNA synthesis are about 5 times faster in the presence of POLD4 (Pol-delta4 complex) than in its absence (Pol-delta3 complex), while the affinity of the enzyme for its DNA and dNTP substrates appears unchanged. The Pol-delta3 complex is more likely to proofread DNA synthesis because it cleaves single-stranded DNA twice as fast and transfers mismatched DNA from the polymerase to the exonuclease sites 9 times faster compared to the Pol-delta3 complex. Pol-delta3 also extends mismatched primers 3 times more slowly in the absence of POLD4. The conversion of Pol-delta4 into Pol-delta3 is induced by genotoxic stress or by replication stress leading POLD4 degradation. Stimulated in the presence of PCNA. This stimulation is further increased in the presence of KCTD13/PDIP1, most probably via direct interaction between KCTD13 and POLD2. Functionally, as the catalytic component of the trimeric (Pol-delta3 complex) and tetrameric DNA polymerase delta complexes (Pol-delta4 complex), plays a crucial role in high fidelity genome replication, including in lagging strand synthesis, and repair. Exhibits both DNA polymerase and 3'- to 5'-exonuclease activities. Requires the presence of accessory proteins POLD2, POLD3 and POLD4 for full activity. Depending upon the absence (Pol-delta3) or the presence of POLD4 (Pol-delta4), displays differences in catalytic activity. Most notably, expresses higher proofreading activity in the context of Pol-delta3 compared with that of Pol-delta4. Although both Pol-delta3 and Pol-delta4 process Okazaki fragments in vitro, Pol-delta3 may be better suited to fulfill this task, exhibiting near-absence of strand displacement activity compared to Pol-delta4 and stalling on encounter with the 5'-blocking oligonucleotides. Pol-delta3 idling process may avoid the formation of a gap, while maintaining a nick that can be readily ligated. Along with DNA polymerase kappa, DNA polymerase delta carries out approximately half of nucleotide excision repair (NER) synthesis following UV irradiation. Under conditions of DNA replication stress, in the presence of POLD3 and POLD4, may catalyze the repair of broken replication forks through break-induced replication (BIR). Involved in the translesion synthesis (TLS) of templates carrying O6-methylguanine, 8oxoG or abasic sites. This chain is DNA polymerase delta catalytic subunit, found in Homo sapiens (Human).